Consider the following 1296-residue polypeptide: DNA-directed RNA polymerase subunit beta' (1296 aa).

Positions 60, 62, 75, and 78 each coordinate Zn(2+). Residues Gly188–Arg209 form a disordered region. Positions 535, 537, and 539 each coordinate Mg(2+). Zn(2+)-binding residues include Cys877, Cys954, Cys961, and Cys964.

Belongs to the RNA polymerase beta' chain family. As to quaternary structure, the RNAP catalytic core consists of 2 alpha, 1 beta, 1 beta' and 1 omega subunit. When a sigma factor is associated with the core the holoenzyme is formed, which can initiate transcription. Mg(2+) serves as cofactor. Requires Zn(2+) as cofactor.

The catalysed reaction is RNA(n) + a ribonucleoside 5'-triphosphate = RNA(n+1) + diphosphate. Its function is as follows. DNA-dependent RNA polymerase catalyzes the transcription of DNA into RNA using the four ribonucleoside triphosphates as substrates. This chain is DNA-directed RNA polymerase subunit beta', found in Parafrankia sp. (strain EAN1pec).